The primary structure comprises 352 residues: Phenylalanine--tRNA ligase alpha subunit (352 aa).

Glu-258 contacts Mg(2+).

It belongs to the class-II aminoacyl-tRNA synthetase family. Phe-tRNA synthetase alpha subunit type 1 subfamily. In terms of assembly, tetramer of two alpha and two beta subunits. Mg(2+) serves as cofactor.

The protein localises to the cytoplasm. The catalysed reaction is tRNA(Phe) + L-phenylalanine + ATP = L-phenylalanyl-tRNA(Phe) + AMP + diphosphate + H(+). In Staphylococcus aureus (strain Mu3 / ATCC 700698), this protein is Phenylalanine--tRNA ligase alpha subunit.